The following is a 484-amino-acid chain: MSKPFLSLLSLSLLLFTSTCLATSSEFDRLNQCRLDNINALEPDHRVESEAGLTETWNPNHPELRCAGVSLIRRTIDPNGLHLPSYSPSPQLIYIIQGKGVIGLTLPGCPQTYQEPRSSQSRQGSRQQQPDSHQKIRRFRKGDIIAIPSGIPYWTYNNGDEPLVAISLLDTSNIANQLDSTPRVFYLVGNPEVEFPETQEEQQERHQQKHSLPVGRRGGQHQQEEESEEQKDGNSVLSGFSSEFLAHTFNTEEDTAKRLRSPRDKRNQIVRVEGGLRIINPEGQQEEEEEEEEEKQRSEQGRNGLEETICSLKIRENIAQPARADLYNPRAGSISTANSLTLPILRYLRLSAEYVRLYRNGIYAPHWNINANSLLYVIRGEGRVRIVNSQGNAVFDNKVTKGQLVVVPQNFVVAEQAGEEEGLEYLVFKTNDRAAVSHVQQVFRATPADVLANAFGLRQRQVTELKLSGNRGPLVHPQSQSQSN.

An N-terminal signal peptide occupies residues 1-22 (MSKPFLSLLSLSLLLFTSTCLA). Intrachain disulfides connect Cys-33/Cys-66 and Cys-109/Cys-310. Residues 38–257 (INALEPDHRV…TFNTEEDTAK (220 aa)) form the Cupin type-1 1 domain. 3 disordered regions span residues 109 to 141 (CPQT…RFRK), 196 to 236 (PETQ…GNSV), and 275 to 304 (GLRI…GRNG). Over residues 117–129 (RSSQSRQGSRQQQ) the composition is skewed to low complexity. Residues 284–293 (QQEEEEEEEE) show a composition bias toward acidic residues. The 148-residue stretch at 316-463 (ENIAQPARAD…AFGLRQRQVT (148 aa)) folds into the Cupin type-1 2 domain.

This sequence belongs to the 11S seed storage protein (globulins) family. In terms of assembly, hexamer; each subunit is composed of an acidic and a basic chain derived from a single precursor and linked by a disulfide bond.

This protein found in the seeds of many leguminous and non-leguminous plants is the source of sulfur-containing amino acids in seed meals. The chain is Legumin type B (LEB4) from Vicia faba (Broad bean).